Reading from the N-terminus, the 96-residue chain is Small ribosomal subunit protein bS6 (96 aa).

It belongs to the bacterial ribosomal protein bS6 family.

In terms of biological role, binds together with bS18 to 16S ribosomal RNA. The chain is Small ribosomal subunit protein bS6 from Salinispora arenicola (strain CNS-205).